We begin with the raw amino-acid sequence, 241 residues long: Beta-nerve growth factor (241 aa).

Positions methionine 1–alanine 18 are cleaved as a signal peptide. A propeptide spanning residues glutamate 19–arginine 121 is cleaved from the precursor. Asparagine 69 and asparagine 114 each carry an N-linked (GlcNAc...) asparagine glycan. 3 disulfides stabilise this stretch: cysteine 136–cysteine 201, cysteine 179–cysteine 229, and cysteine 189–cysteine 231. Arginine 171, tyrosine 173, and lysine 209 together coordinate a 1-acyl-sn-glycero-3-phospho-(1D-myo-inositol). Position 171 (arginine 171) interacts with a 1-acyl-sn-glycero-3-phospho-L-serine. An a 1-acyl-sn-glycero-3-phospho-L-serine-binding site is contributed by lysine 209.

The protein belongs to the NGF-beta family. Homodimer. The homodimer interacts with a single NTRK1 chain. The homodimer interacts with a single NGFR chain. The NGF dimer interacts with a single SORCS2 chain (via extracellular domain). The NGF precursor (proNGF) binds to a receptor complex formed by SORT1 and NGFR, which leads to NGF endocytosis. Both mature NGF and the immature NGF precursor (proNGF) interact with SORCS2 and with the heterodimer formed by SORCS2 and NGFR (via extracellular domains). The NGF precursor (proNGF) has much higher affinity for SORCS2 than mature NGF. The NGF precursor (proNGF) has much higher affinity for SORT1 than mature NGF. Interacts with ADAM10 in a divalent cation-dependent manner. Interacts with SORCS3. In terms of tissue distribution, detected in submaxillary gland (at protein level). Highly expressed in male submaxillary gland. Levels are much lower in female submaxillary gland.

It is found in the secreted. The protein resides in the endosome lumen. Its function is as follows. Nerve growth factor is important for the development and maintenance of the sympathetic and sensory nervous systems. Extracellular ligand for the NTRK1 and NGFR receptors, activates cellular signaling cascades to regulate neuronal proliferation, differentiation and survival. The immature NGF precursor (proNGF) functions as a ligand for the heterodimeric receptor formed by SORCS2 and NGFR, and activates cellular signaling cascades that lead to inactivation of RAC1 and/or RAC2, reorganization of the actin cytoskeleton and neuronal growth cone collapse. In contrast to mature NGF, the precursor form (proNGF) promotes neuronal apoptosis (in vitro). Inhibits metalloproteinase-dependent proteolysis of platelet glycoprotein VI. Binds lysophosphatidylinositol and lysophosphatidylserine between the two chains of the homodimer. The lipid-bound form promotes histamine relase from mast cells, contrary to the lipid-free form. This chain is Beta-nerve growth factor (Ngf), found in Mus musculus (Mouse).